A 114-amino-acid chain; its full sequence is Cytochrome c2 (114 aa).

Residue Gln1 is modified to Pyrrolidone carboxylic acid. Residues Cys13, Cys16, His17, and Met93 each coordinate heme c.

Belongs to the cytochrome c family. Binds 1 heme c group covalently per subunit.

Its function is as follows. Cytochrome c2 is found mainly in purple, non-sulfur, photosynthetic bacteria where it functions as the electron donor to the oxidized bacteriochlorophyll in the photophosphorylation pathway. However, it may also have a role in the respiratory chain and is found in some non-photosynthetic bacteria. The polypeptide is Cytochrome c2 (cycA) (Rhodopseudomonas palustris).